The following is a 130-amino-acid chain: Small ribosomal subunit protein bS16 (130 aa).

Residues 98–109 show a composition bias toward basic and acidic residues; it reads AAAKQAAKDAAE. Residues 98-130 form a disordered region; it reads AAAKQAAKDAAEAKAAAAAEAEAPAADAEASEG. Residues 110–130 show a composition bias toward low complexity; that stretch reads AKAAAAAEAEAPAADAEASEG.

It belongs to the bacterial ribosomal protein bS16 family.

This Synechococcus sp. (strain CC9902) protein is Small ribosomal subunit protein bS16.